We begin with the raw amino-acid sequence, 600 residues long: Glutamine--fructose-6-phosphate aminotransferase [isomerizing] (600 aa).

Cys2 acts as the Nucleophile; for GATase activity in catalysis. Positions 2–217 constitute a Glutamine amidotransferase type-2 domain; that stretch reads CGIVGFIGEQ…DKEIVIVTKE (216 aa). 2 SIS domains span residues 283 to 422 and 452 to 590; these read IRNA…AKGE and LAKQ…VDKP. Catalysis depends on Lys595, which acts as the For Fru-6P isomerization activity.

In terms of assembly, homodimer.

The protein resides in the cytoplasm. The enzyme catalyses D-fructose 6-phosphate + L-glutamine = D-glucosamine 6-phosphate + L-glutamate. In terms of biological role, catalyzes the first step in hexosamine metabolism, converting fructose-6P into glucosamine-6P using glutamine as a nitrogen source. This chain is Glutamine--fructose-6-phosphate aminotransferase [isomerizing], found in Bacillus cereus (strain ATCC 10987 / NRS 248).